The following is a 616-amino-acid chain: Methionine--tRNA ligase, chloroplastic/mitochondrial (616 aa).

The 'HIGH' region motif lies at 78–88 (YYVNAPPHMGS). The 'KMSKS' region signature appears at 366-370 (KMGKS). An ATP-binding site is contributed by Lys-369. The span at 582–593 (LNPEKEEDEKKP) shows a compositional bias: basic and acidic residues. A disordered region spans residues 582–602 (LNPEKEEDEKKPKVGKKTGKA).

The protein belongs to the class-I aminoacyl-tRNA synthetase family.

It localises to the plastid. The protein localises to the chloroplast. The protein resides in the mitochondrion. It carries out the reaction tRNA(Met) + L-methionine + ATP = L-methionyl-tRNA(Met) + AMP + diphosphate. The protein is Methionine--tRNA ligase, chloroplastic/mitochondrial of Arabidopsis thaliana (Mouse-ear cress).